Here is a 373-residue protein sequence, read N- to C-terminus: Nuclear hormone receptor family member nhr-69 (373 aa).

The nuclear receptor DNA-binding region spans 3–78 (EEICHICNDK…AGMKSNAIQN (76 aa)). 2 NR C4-type zinc fingers span residues 6–26 (CHICNDKSTGKHYGAISCDGC) and 42–66 (CRFEQNCDVTKNKRNACRACRLQKC). In terms of domain architecture, NR LBD spans 93 to 344 (EKEDLIDQLV…SLMEELILND (252 aa)).

Belongs to the nuclear hormone receptor family. In terms of assembly, interacts with R-SMAD daf-8. Expressed in the ASI neurons, hypodermis, and in tail neurons.

The protein resides in the nucleus. Its function is as follows. Orphan nuclear receptor which, in cooperation with R-SMAD daf-8, modulates the Insulin/IGF-1-like signaling (IIS) pathway, perhaps by regulating expression of the potassium channel exp-2, which in turn modulates the secretion of insulin-like peptide daf-28. The protein is Nuclear hormone receptor family member nhr-69 (nhr-69) of Caenorhabditis elegans.